We begin with the raw amino-acid sequence, 426 residues long: Histone-binding protein RBBP7 (426 aa).

WD repeat units follow at residues 47–123 (QWLP…KINH), 129–174 (RARY…LRLR), 182–218 (GLSW…KIVD), 229–270 (VVED…HSVD), 276–313 (VNCL…LHSF), 319–370 (EIFQ…LFIH), and 377–404 (ISDF…VWQM).

This sequence belongs to the WD repeat RBAP46/RBAP48/MSI1 family. Binds directly to helix 1 of the histone fold of histone H4, a region that is not accessible when H4 is in chromatin.

It localises to the nucleus. In terms of biological role, core histone-binding subunit that may target chromatin remodeling factors, histone acetyltransferases and histone deacetylases to their histone substrates in a manner that is regulated by nucleosomal DNA. Component of several complexes which regulate chromatin metabolism. The chain is Histone-binding protein RBBP7 (rbbp7) from Danio rerio (Zebrafish).